The chain runs to 64 residues: MLYELVAYGIAQGTAEKVVSLINAGLTVGSIISILGGVTVGLSGVFTAVKAAIAKQGIKKAIQL.

Positions 1-4 (MLYE) are excised as a propeptide. The cyclopeptide (Leu-Leu) cross-link spans 5–64 (LVAYGIAQGTAEKVVSLINAGLTVGSIISILGGVTVGLSGVFTAVKAAIAKQGIKKAIQL).

It is found in the secreted. In terms of biological role, cyclopeptide antibiotic that inhibits the growth of Gram-positive bacteria, but has no effect on the growth of Gram-negative bacteria. The protein is Carnocyclin-A of Carnobacterium maltaromaticum (Carnobacterium piscicola).